The sequence spans 92 residues: DNA/RNA-binding protein Alba (92 aa).

Lysine 11 is subject to N6-acetyllysine.

Belongs to the histone-like Alba family. Post-translationally, acetylated. Acetylation at Lys-11 decreases DNA-binding affinity.

The protein localises to the cytoplasm. The protein resides in the chromosome. Its function is as follows. Binds double-stranded DNA tightly but without sequence specificity. Involved in DNA compaction. This is DNA/RNA-binding protein Alba from Pyrobaculum aerophilum (strain ATCC 51768 / DSM 7523 / JCM 9630 / CIP 104966 / NBRC 100827 / IM2).